Consider the following 429-residue polypeptide: Carboxypeptidase B (429 aa).

The N-terminal stretch at 1–15 (MKFLLVLALCAVVYA) is a signal peptide. A Peptidase M14 domain is found at 121–423 (NYQELEVIDE…EGIVVGARRA (303 aa)). Positions 182 and 185 each coordinate Zn(2+). Substrate is bound by residues 182 to 185 (HARE), arginine 236, and 256 to 257 (NR). Cysteine 250 and cysteine 273 are oxidised to a cystine. Histidine 309 contacts Zn(2+). Substrate-binding positions include 310–311 (SF) and tyrosine 365. The active-site Proton donor/acceptor is the glutamate 387.

Belongs to the peptidase M14 family. It depends on Zn(2+) as a cofactor.

It is found in the secreted. It catalyses the reaction Preferential release of a C-terminal lysine or arginine amino acid.. With respect to regulation, highly resistant to inhibition by potato carboxypeptidase inhibitor (PCI). Moderately inhibited by leech carboxypeptidase inhibitor (LCI) and tick carboxypeptidase inhibitor (TCI). Metalloprotease which cleaves a single amino acid from the C-terminal end of polypeptide chains. Shows a strong preference for peptides with a terminal lysine residue. This is Carboxypeptidase B from Helicoverpa zea (Corn earworm moth).